Consider the following 316-residue polypeptide: Putative mannose-6-phosphate isomerase YvyI (316 aa).

Positions 98, 116, and 173 each coordinate Zn(2+). Arginine 193 is a catalytic residue.

Belongs to the mannose-6-phosphate isomerase type 1 family. Zn(2+) is required as a cofactor.

It catalyses the reaction D-mannose 6-phosphate = D-fructose 6-phosphate. The sequence is that of Putative mannose-6-phosphate isomerase YvyI (yvyI) from Bacillus subtilis (strain 168).